A 547-amino-acid chain; its full sequence is TBCC domain-containing protein 1 (547 aa).

Positions 304–435 (PHTHRMVVMS…LEDHMAQTGL (132 aa)) constitute a C-CAP/cofactor C-like domain.

This sequence belongs to the TBCC family.

It is found in the cytoplasm. The protein localises to the cytoskeleton. It localises to the microtubule organizing center. The protein resides in the centrosome. Its subcellular location is the spindle pole. May play a role in the regulation of centrosome and Golgi apparatus positioning. This Xenopus laevis (African clawed frog) protein is TBCC domain-containing protein 1 (tbccd1).